Here is a 251-residue protein sequence, read N- to C-terminus: UPF0309 protein GK1441 (251 aa).

An SIS domain is found at 31–214 (VSEAIQNGGI…VLMAENGIEP (184 aa)).

The protein belongs to the UPF0309 family.

In Geobacillus kaustophilus (strain HTA426), this protein is UPF0309 protein GK1441.